A 158-amino-acid polypeptide reads, in one-letter code: Endoribonuclease YbeY (158 aa).

Zn(2+)-binding residues include His119, His123, and Asp129.

The protein belongs to the endoribonuclease YbeY family. The cofactor is Zn(2+).

It localises to the cytoplasm. Its function is as follows. Single strand-specific metallo-endoribonuclease involved in late-stage 70S ribosome quality control and in maturation of the 3' terminus of the 16S rRNA. This is Endoribonuclease YbeY from Chlamydia abortus (strain DSM 27085 / S26/3) (Chlamydophila abortus).